Consider the following 486-residue polypeptide: Glycogen synthase (486 aa).

Position 15 (Lys15) interacts with ADP-alpha-D-glucose.

Belongs to the glycosyltransferase 1 family. Bacterial/plant glycogen synthase subfamily.

It carries out the reaction [(1-&gt;4)-alpha-D-glucosyl](n) + ADP-alpha-D-glucose = [(1-&gt;4)-alpha-D-glucosyl](n+1) + ADP + H(+). Its pathway is glycan biosynthesis; glycogen biosynthesis. Its function is as follows. Synthesizes alpha-1,4-glucan chains using ADP-glucose. This chain is Glycogen synthase, found in Pseudothermotoga lettingae (strain ATCC BAA-301 / DSM 14385 / NBRC 107922 / TMO) (Thermotoga lettingae).